Consider the following 90-residue polypeptide: Secretoglobin family 1D member 1 (90 aa).

The first 21 residues, 1-21, serve as a signal peptide directing secretion; sequence MRLSVCLLLLTLALCCYRANA.

Heterodimer of a lipophilin A and a lipophilin C (mammaglobin B) monomer associated head to head. In terms of tissue distribution, expressed in lachrymal gland, thymus, kidney, testis, ovary and salivary gland.

It is found in the secreted. Functionally, may bind androgens and other steroids, may also bind estramustine, a chemotherapeutic agent used for prostate cancer. May be under transcriptional regulation of steroid hormones. This is Secretoglobin family 1D member 1 (SCGB1D1) from Homo sapiens (Human).